We begin with the raw amino-acid sequence, 204 residues long: GTP cyclohydrolase-2 (204 aa).

Residue 49-53 (RIHSE) participates in GTP binding. 3 residues coordinate Zn(2+): C54, C65, and C67. GTP is bound by residues Q70, 92-94 (EGR), and T114. D126 acts as the Proton acceptor in catalysis. Catalysis depends on R128, which acts as the Nucleophile. The GTP site is built by T149 and K154.

This sequence belongs to the GTP cyclohydrolase II family. The cofactor is Zn(2+).

It carries out the reaction GTP + 4 H2O = 2,5-diamino-6-hydroxy-4-(5-phosphoribosylamino)-pyrimidine + formate + 2 phosphate + 3 H(+). It functions in the pathway cofactor biosynthesis; riboflavin biosynthesis; 5-amino-6-(D-ribitylamino)uracil from GTP: step 1/4. Its function is as follows. Catalyzes the conversion of GTP to 2,5-diamino-6-ribosylamino-4(3H)-pyrimidinone 5'-phosphate (DARP), formate and pyrophosphate. The chain is GTP cyclohydrolase-2 from Shewanella baltica (strain OS155 / ATCC BAA-1091).